A 316-amino-acid polypeptide reads, in one-letter code: Phosphatidylglycerol--prolipoprotein diacylglyceryl transferase (316 aa).

Transmembrane regions (helical) follow at residues 18 to 38, 47 to 67, and 95 to 115; these read PIPI…AIWL, GGNP…GIIG, and NGGL…AVFF. An a 1,2-diacyl-sn-glycero-3-phospho-(1'-sn-glycerol)-binding site is contributed by Arg-141. The next 2 helical transmembrane spans lie at 188 to 208 and 251 to 271; these read VHPT…LLMW and INTI…FLLK. The segment at 292–316 is disordered; it reads AVASPDGKPLPKAGEGIDGETPSTR.

Belongs to the Lgt family.

Its subcellular location is the cell membrane. The enzyme catalyses L-cysteinyl-[prolipoprotein] + a 1,2-diacyl-sn-glycero-3-phospho-(1'-sn-glycerol) = an S-1,2-diacyl-sn-glyceryl-L-cysteinyl-[prolipoprotein] + sn-glycerol 1-phosphate + H(+). Its pathway is protein modification; lipoprotein biosynthesis (diacylglyceryl transfer). Functionally, catalyzes the transfer of the diacylglyceryl group from phosphatidylglycerol to the sulfhydryl group of the N-terminal cysteine of a prolipoprotein, the first step in the formation of mature lipoproteins. This chain is Phosphatidylglycerol--prolipoprotein diacylglyceryl transferase, found in Corynebacterium glutamicum (strain ATCC 13032 / DSM 20300 / JCM 1318 / BCRC 11384 / CCUG 27702 / LMG 3730 / NBRC 12168 / NCIMB 10025 / NRRL B-2784 / 534).